The sequence spans 810 residues: Phenylalanine--tRNA ligase beta subunit (810 aa).

Positions 40–153 constitute a tRNA-binding domain; sequence KLPDQKVIVG…EACEIGQPLA (114 aa). The B5 domain occupies 399-480; it reads AAQKIVSLRP…RLYGYNNLEP (82 aa). Residues D458, D464, E467, and E468 each coordinate Mg(2+). The FDX-ACB domain maps to 714 to 808; it reads SKFPVVERDL…ARSELGAVIR (95 aa).

The protein belongs to the phenylalanyl-tRNA synthetase beta subunit family. Type 1 subfamily. Tetramer of two alpha and two beta subunits. It depends on Mg(2+) as a cofactor.

It is found in the cytoplasm. The enzyme catalyses tRNA(Phe) + L-phenylalanine + ATP = L-phenylalanyl-tRNA(Phe) + AMP + diphosphate + H(+). The polypeptide is Phenylalanine--tRNA ligase beta subunit (Chlorobaculum tepidum (strain ATCC 49652 / DSM 12025 / NBRC 103806 / TLS) (Chlorobium tepidum)).